The following is a 175-amino-acid chain: MVLQQSDLLILGVVIGTHGLRGDLKIRGSDQDFPLLSKMHQLVFLREGETVLKCARRKAGWYKGHLLLQIAGYRDVRAVQHLVGCEVAVRRDDVPGLPAGEYYWFQLKGMTAVDRRLGALGCLEDIFTTAAHDIYVINGDYGEVLVPAVKAFIADVDLESNRILFDLPDGLVQET.

One can recognise a PRC barrel domain in the interval alanine 99–leucine 171.

The protein belongs to the RimM family. As to quaternary structure, binds ribosomal protein uS19.

It localises to the cytoplasm. An accessory protein needed during the final step in the assembly of 30S ribosomal subunit, possibly for assembly of the head region. Essential for efficient processing of 16S rRNA. May be needed both before and after RbfA during the maturation of 16S rRNA. It has affinity for free ribosomal 30S subunits but not for 70S ribosomes. The polypeptide is Ribosome maturation factor RimM (Syntrophotalea carbinolica (strain DSM 2380 / NBRC 103641 / GraBd1) (Pelobacter carbinolicus)).